The chain runs to 439 residues: Serine hydroxymethyltransferase (439 aa).

(6S)-5,6,7,8-tetrahydrofolate is bound at residue 126–128 (AHV). K232 carries the post-translational modification N6-(pyridoxal phosphate)lysine.

Belongs to the SHMT family. Homodimer. The cofactor is pyridoxal 5'-phosphate.

It localises to the cytoplasm. It participates in amino-acid biosynthesis; glycine biosynthesis; glycine from L-serine: step 1/1. Its function is as follows. Catalyzes the reversible interconversion of serine and glycine with a modified folate serving as the one-carbon carrier. Also exhibits a pteridine-independent aldolase activity toward beta-hydroxyamino acids, producing glycine and aldehydes, via a retro-aldol mechanism. The chain is Serine hydroxymethyltransferase from Staphylothermus marinus (strain ATCC 43588 / DSM 3639 / JCM 9404 / F1).